The following is a 145-amino-acid chain: Holo-[acyl-carrier-protein] synthase (145 aa).

Residues Asp8 and Glu59 each contribute to the Mg(2+) site.

The protein belongs to the P-Pant transferase superfamily. AcpS family. Mg(2+) serves as cofactor.

The protein localises to the cytoplasm. It carries out the reaction apo-[ACP] + CoA = holo-[ACP] + adenosine 3',5'-bisphosphate + H(+). Functionally, transfers the 4'-phosphopantetheine moiety from coenzyme A to a Ser of acyl-carrier-protein. This is Holo-[acyl-carrier-protein] synthase from Granulibacter bethesdensis (strain ATCC BAA-1260 / CGDNIH1).